We begin with the raw amino-acid sequence, 174 residues long: Co-chaperone protein HscB homolog (174 aa).

Residues 2 to 74 (NYFDLFNVVP…LRRAEHMLSL (73 aa)) enclose the J domain.

It belongs to the HscB family. As to quaternary structure, interacts with HscA and stimulates its ATPase activity.

Co-chaperone involved in the maturation of iron-sulfur cluster-containing proteins. Seems to help targeting proteins to be folded toward HscA. This is Co-chaperone protein HscB homolog from Shewanella frigidimarina (strain NCIMB 400).